The sequence spans 381 residues: tRNA pseudouridine synthase D (381 aa).

D81 acts as the Nucleophile in catalysis. The 176-residue stretch at 160–335 folds into the TRUD domain; sequence GMPNYFGPQR…TLGSRRFFWV (176 aa).

The protein belongs to the pseudouridine synthase TruD family.

The enzyme catalyses uridine(13) in tRNA = pseudouridine(13) in tRNA. In terms of biological role, responsible for synthesis of pseudouridine from uracil-13 in transfer RNAs. This chain is tRNA pseudouridine synthase D, found in Helicobacter pylori (strain Shi470).